A 222-amino-acid chain; its full sequence is Putative N-acetylmannosamine-6-phosphate 2-epimerase (222 aa).

Belongs to the NanE family.

It carries out the reaction an N-acyl-D-glucosamine 6-phosphate = an N-acyl-D-mannosamine 6-phosphate. Its pathway is amino-sugar metabolism; N-acetylneuraminate degradation; D-fructose 6-phosphate from N-acetylneuraminate: step 3/5. Its function is as follows. Converts N-acetylmannosamine-6-phosphate (ManNAc-6-P) to N-acetylglucosamine-6-phosphate (GlcNAc-6-P). The sequence is that of Putative N-acetylmannosamine-6-phosphate 2-epimerase from Oceanobacillus iheyensis (strain DSM 14371 / CIP 107618 / JCM 11309 / KCTC 3954 / HTE831).